We begin with the raw amino-acid sequence, 63 residues long: Large ribosomal subunit protein bL28 (63 aa).

It belongs to the bacterial ribosomal protein bL28 family.

The chain is Large ribosomal subunit protein bL28 from Brachyspira hyodysenteriae (strain ATCC 49526 / WA1).